The following is a 989-amino-acid chain: AP-2 complex subunit alpha-2 (989 aa).

HEAT repeat units follow at residues 112–149, 188–225, 368–402, and 403–440; these read EMLP…KEVA, VTPD…ENPI, IMIK…MCDK, and NTCK…KFAS. A disordered region spans residues 610–745; that stretch reads DNSNTTSNTA…SSSPISSGGS (136 aa). Positions 611–623 are enriched in low complexity; that stretch reads NSNTTSNTANNSN. Positions 624-638 are enriched in polar residues; that stretch reads MINSQDSKISSGGFN. The span at 639–703 shows a compositional bias: low complexity; it reads QSPQPSQQQQ…QPVYQQQQQA (65 aa). Residues 704–714 are compositionally biased toward polar residues; the sequence is ESFSPVQSDTV. A compositionally biased stretch (low complexity) spans 715-745; that stretch reads SSFGQQQQQQQGGFSSPTIQASSSPISSGGS.

This sequence belongs to the adaptor complexes large subunit family. In terms of assembly, adaptor protein complex 2 (AP-2) is a heterotetramer composed of two large adaptins (alpha-type and beta-type subunits), a medium adaptin (mu-type subunit AP50) and a small adaptin (sigma-type subunit AP17).

The protein localises to the cell membrane. It localises to the membrane. Its subcellular location is the coated pit. Its function is as follows. Component of the adaptor complexes which link clathrin to receptors in coated vesicles. Clathrin-associated protein complexes are believed to interact with the cytoplasmic tails of membrane proteins, leading to their selection and concentration. In Dictyostelium discoideum (Social amoeba), this protein is AP-2 complex subunit alpha-2 (ap2a1-1).